We begin with the raw amino-acid sequence, 623 residues long: Bifunctional dihydrofolate reductase-thymidylate synthase (623 aa).

In terms of domain architecture, DHFR spans 9-237; the sequence is DIYAICACCK…TTLDFLVYSK (229 aa). 13-14 contributes to the substrate binding site; the sequence is IC. Residues Ala-15 and 38 to 44 contribute to the NADP(+) site; that span reads GLGNKGT. Asp-53 is a substrate binding site. 3 consecutive repeat copies span residues 88–91, 94–97, and 100–103. The interval 88 to 103 is 3 X 4 AA repeats of G-G-D-N; the sequence is GGDNTSGGDNTHGGDN. NADP(+) is bound by residues 115 to 117, 137 to 139, and Asp-153; these read RSS and SKT. Substrate contacts are provided by Ile-173, Tyr-179, and Thr-194. Residue 174 to 181 coordinates NADP(+); sequence GGAQVYRE. The segment at 263–309 is disordered; that stretch reads TAMRRNVAPRTAAPPMGPHSRANGERAPPRARARRTTPRQRKTTSCT. Residues 291-304 are compositionally biased toward basic residues; it reads PRARARRTTPRQRK. A thymidylate synthase region spans residues 337–623; that stretch reads QHPEYQYLGI…HDKITMEMAA (287 aa). Residue Arg-360 participates in dUMP binding. Residue Cys-505 is part of the active site. DUMP-binding positions include His-506, 524–528, Asn-536, and 566–568; these read QRSCD and HVY.

It in the N-terminal section; belongs to the dihydrofolate reductase family. In the C-terminal section; belongs to the thymidylate synthase family. In terms of assembly, homodimer.

It catalyses the reaction (6S)-5,6,7,8-tetrahydrofolate + NADP(+) = 7,8-dihydrofolate + NADPH + H(+). The enzyme catalyses dUMP + (6R)-5,10-methylene-5,6,7,8-tetrahydrofolate = 7,8-dihydrofolate + dTMP. It participates in cofactor biosynthesis; tetrahydrofolate biosynthesis; 5,6,7,8-tetrahydrofolate from 7,8-dihydrofolate: step 1/1. Bifunctional enzyme. Involved in de novo dTMP biosynthesis. Key enzyme in folate metabolism. Catalyzes an essential reaction for de novo glycine and purine synthesis, DNA precursor synthesis, and for the conversion of dUMP to dTMP. The polypeptide is Bifunctional dihydrofolate reductase-thymidylate synthase (Plasmodium vivax).